The following is a 968-amino-acid chain: Translation initiation factor IF-2 (968 aa).

A compositionally biased stretch (low complexity) spans 51–76 (PAAGASKSEAPAAAPKAPASPAATRP). The interval 51-369 (PAAGASKSEA…GVSVPRGDGN (319 aa)) is disordered. Residues 77-87 (APAPGPAAPKA) show a composition bias toward pro residues. Positions 93-102 (EAPAAASAPS) are enriched in low complexity. The span at 103–112 (APAPAAPAPA) shows a compositional bias: pro residues. 3 stretches are compositionally biased toward low complexity: residues 113–122 (APAAAASAPS), 128–170 (APST…GNNP), and 239–254 (GARP…PGAR). Positions 281-336 (GRPGGGGRGPGRPGGAPGTGGAPGAGGGAPAGGGFGKGGRGRGGTQGAFGKGGAGR) are enriched in gly residues. The segment covering 337-346 (GKQRKSKRAK) has biased composition (basic residues). The region spanning 461–632 (ARPPVVTVMG…AVLLTADAAL (172 aa)) is the tr-type G domain. Residues 470–477 (GHVDHGKT) are G1. 470–477 (GHVDHGKT) lines the GTP pocket. The interval 495 to 499 (GITQH) is G2. The interval 520 to 523 (DTPG) is G3. GTP contacts are provided by residues 520–524 (DTPGH) and 574–577 (NKID). The G4 stretch occupies residues 574–577 (NKID). The segment at 610 to 612 (SAR) is G5.

The protein belongs to the TRAFAC class translation factor GTPase superfamily. Classic translation factor GTPase family. IF-2 subfamily.

It localises to the cytoplasm. In terms of biological role, one of the essential components for the initiation of protein synthesis. Protects formylmethionyl-tRNA from spontaneous hydrolysis and promotes its binding to the 30S ribosomal subunits. Also involved in the hydrolysis of GTP during the formation of the 70S ribosomal complex. This is Translation initiation factor IF-2 from Arthrobacter sp. (strain FB24).